The sequence spans 110 residues: U-scoloptoxin(16)-Er7a (110 aa).

The first 26 residues, 1 to 26 (MTSTRKLSVSCLIVFMVSSLIAVSSG), serve as a signal peptide directing secretion.

Belongs to the scoloptoxin-16 family. In terms of processing, contains 4 disulfide bonds. In terms of tissue distribution, expressed by the venom gland.

It localises to the secreted. The polypeptide is U-scoloptoxin(16)-Er7a (Ethmostigmus rubripes (Giant centipede)).